We begin with the raw amino-acid sequence, 301 residues long: Methionine aminopeptidase (301 aa).

A substrate-binding site is contributed by His-65. A divalent metal cation-binding residues include Asp-85, Asp-96, and His-156. His-164 contacts substrate. Positions 189 and 284 each coordinate a divalent metal cation.

This sequence belongs to the peptidase M24A family. Methionine aminopeptidase archaeal type 2 subfamily. In terms of assembly, monomer. It depends on Co(2+) as a cofactor. Requires Zn(2+) as cofactor. Mn(2+) is required as a cofactor. Fe(2+) serves as cofactor.

It carries out the reaction Release of N-terminal amino acids, preferentially methionine, from peptides and arylamides.. Its function is as follows. Removes the N-terminal methionine from nascent proteins. The N-terminal methionine is often cleaved when the second residue in the primary sequence is small and uncharged (Met-Ala-, Cys, Gly, Pro, Ser, Thr, or Val). The protein is Methionine aminopeptidase of Saccharolobus solfataricus (strain ATCC 35092 / DSM 1617 / JCM 11322 / P2) (Sulfolobus solfataricus).